A 345-amino-acid chain; its full sequence is UDP-3-O-acylglucosamine N-acyltransferase (345 aa).

His252 functions as the Proton acceptor in the catalytic mechanism.

This sequence belongs to the transferase hexapeptide repeat family. LpxD subfamily. In terms of assembly, homotrimer.

It carries out the reaction a UDP-3-O-[(3R)-3-hydroxyacyl]-alpha-D-glucosamine + a (3R)-hydroxyacyl-[ACP] = a UDP-2-N,3-O-bis[(3R)-3-hydroxyacyl]-alpha-D-glucosamine + holo-[ACP] + H(+). It participates in bacterial outer membrane biogenesis; LPS lipid A biosynthesis. Catalyzes the N-acylation of UDP-3-O-acylglucosamine using 3-hydroxyacyl-ACP as the acyl donor. Is involved in the biosynthesis of lipid A, a phosphorylated glycolipid that anchors the lipopolysaccharide to the outer membrane of the cell. In Rickettsia rickettsii, this protein is UDP-3-O-acylglucosamine N-acyltransferase.